A 317-amino-acid chain; its full sequence is Melanocyte-stimulating hormone receptor (317 aa).

The Extracellular segment spans residues 1–37 (MPMQGAQRKLLGSLNSTPTATSNLGLAANHTGAPCLE). Residue Asn-29 is glycosylated (N-linked (GlcNAc...) asparagine). The chain crosses the membrane as a helical span at residues 38-63 (VSIPDGLFLSLGLVSLVENVLVVAAV). The Cytoplasmic segment spans residues 64–72 (AKNRNLHSS). A helical membrane pass occupies residues 73–93 (MYCFICCLALSDLLVSGSNML). At 94 to 118 (ETAVILLLETGALATRTSVVQQLHN) the chain is on the extracellular side. Residues 119–140 (TINVLTCSSMLCSLCFLGAIAV) traverse the membrane as a helical segment. Residues 141–163 (DRYISIFYALRYHSIMTLPRAQR) are Cytoplasmic-facing. A helical transmembrane segment spans residues 164 to 183 (AIAAIWVASVLSSTLFITYY). Residues 184–191 (DHAAVLLC) are Extracellular-facing. The chain crosses the membrane as a helical span at residues 192–211 (LVVFFLAMLVLMAVLYVHML). At 212-240 (ARACQHAHGIIRLHKRQTPAHQGFGLRGA) the chain is on the cytoplasmic side. The helical transmembrane segment at 241–266 (ATLTILLGIFFLCWGPFFLHLTLVVF) threads the bilayer. Over 267–279 (CPQHLTCSCIFKN) the chain is Extracellular. Residues 280–300 (FKVFLTLIICNTIIDPLIYAF) traverse the membrane as a helical segment. The Cytoplasmic segment spans residues 301 to 317 (RSQELRRTLKEVLLCSW). Cys-315 is lipidated: S-palmitoyl cysteine.

The protein belongs to the G-protein coupled receptor 1 family. As to quaternary structure, interacts with MGRN1, but does not undergo MGRN1-mediated ubiquitination; this interaction competes with GNAS-binding and thus inhibits agonist-induced cAMP production. Interacts with OPN3; the interaction results in a decrease in MC1R-mediated cAMP signaling and ultimately a decrease in melanin production in melanocytes.

Its subcellular location is the cell membrane. Its function is as follows. Receptor for MSH (alpha, beta and gamma) and ACTH. The activity of this receptor is mediated by G proteins which activate adenylate cyclase. Mediates melanogenesis, the production of eumelanin (black/brown) and phaeomelanin (red/yellow), via regulation of cAMP signaling in melanocytes. The sequence is that of Melanocyte-stimulating hormone receptor (MC1R) from Saguinus oedipus (Cotton-top tamarin).